The primary structure comprises 69 residues: MVRVTSVGCFLLVIVSLNLVVLTNACIPEGSSCSSSGSCCHKSCCRWTCNQPCLIPGKRAKLLEFFRQR.

The N-terminal stretch at 1–25 is a signal peptide; the sequence is MVRVTSVGCFLLVIVSLNLVVLTNA. Intrachain disulfides connect cysteine 26/cysteine 40, cysteine 33/cysteine 45, cysteine 39/cysteine 49, and cysteine 44/cysteine 53. 4-carboxyglutamate is present on glutamate 29. At proline 56 the chain carries Proline amide. The propeptide occupies 60-69; it reads AKLLEFFRQR.

Post-translationally, contains 4 disulfide bonds. Expressed by the venom duct.

It localises to the secreted. In Conus textile (Cloth-of-gold cone), this protein is Conotoxin Gla-TxXI.